The chain runs to 344 residues: HTH-type transcriptional repressor MelR (344 aa).

The HTH lacI-type domain occupies 2–58 (VRIKDIALKAKVSSATVSRILNEDESLSVAGETRQRVINIAEELGYQTVAKRRKSRG). Positions 4 to 23 (IKDIALKAKVSSATVSRILN) form a DNA-binding region, H-T-H motif.

The protein localises to the cytoplasm. Represses the melibiose operon melREDCA in the absence of melibiose or raffinose. Binds to two binding sites at the promoter region of the operon. The chain is HTH-type transcriptional repressor MelR from Bacillus subtilis (strain 168).